We begin with the raw amino-acid sequence, 61 residues long: Small ribosomal subunit protein uS14 (61 aa).

Zn(2+) is bound by residues cysteine 24, cysteine 27, cysteine 40, and cysteine 43.

Belongs to the universal ribosomal protein uS14 family. Zinc-binding uS14 subfamily. Part of the 30S ribosomal subunit. Contacts proteins S3 and S10. Zn(2+) serves as cofactor.

Binds 16S rRNA, required for the assembly of 30S particles and may also be responsible for determining the conformation of the 16S rRNA at the A site. This is Small ribosomal subunit protein uS14 from Sulfurovum sp. (strain NBC37-1).